The chain runs to 183 residues: I-kappa-B like protein N2 (183 aa).

2 ANK repeats span residues 62 to 95 and 99 to 129; these read DGNT…DLNL and CHKP…NLEA. The segment at 163–183 is disordered; the sequence is PRQDGSSEDEVSDSEEKSDSE.

Belongs to the polydnaviridae I-Kappa-B like protein family.

Functionally, suppresses the host immune response through NF-kappa-B inactivation. Possesses ankyrin repeat domains required for NF-kappa-B binding but lacks the regulatory regions required for dissociation from NF-kappa-B and degradation. Therefore, prevents host NF-kappa-B release and subsequent activation. The sequence is that of I-kappa-B like protein N2 (N5) from Microplitis demolitor (Parasitoid wasp).